The sequence spans 207 residues: MSSDRQRSDDESPSTSSGSSDADQRDPAAPEPEEQEERKPSATQQKKNTKLSSKTTAKLSTSAKRIQKELAEITLDPPPNCSAGPKGDNIYEWRSTILGPPGSVYEGGVFFLDITFSSDYPFKPPKVTFRTRIYHCNINSQGVICLDILKDNWSPALTISKVLLSICSLLTDCNPADPLVGSIATQYLTNRAEHDRIARQWTKRYAT.

Residues 1 to 10 (MSSDRQRSDD) are compositionally biased toward basic and acidic residues. Residues 1-63 (MSSDRQRSDD…KTTAKLSTSA (63 aa)) are disordered. Position 2 is an N-acetylserine (serine 2). Serine 8 is subject to Phosphoserine. The span at 50–63 (KLSSKTTAKLSTSA) shows a compositional bias: low complexity. The 147-residue stretch at 61–207 (TSAKRIQKEL…ARQWTKRYAT (147 aa)) folds into the UBC core domain. Catalysis depends on cysteine 145, which acts as the Glycyl thioester intermediate.

This sequence belongs to the ubiquitin-conjugating enzyme family. As to quaternary structure, the ubiquitin-loaded form interacts specifically with importin-11 (IPO11), leading to its import into the nucleus. Interacts with NEDD4L.

It is found in the nucleus. Its subcellular location is the cytoplasm. It carries out the reaction S-ubiquitinyl-[E1 ubiquitin-activating enzyme]-L-cysteine + [E2 ubiquitin-conjugating enzyme]-L-cysteine = [E1 ubiquitin-activating enzyme]-L-cysteine + S-ubiquitinyl-[E2 ubiquitin-conjugating enzyme]-L-cysteine.. It functions in the pathway protein modification; protein ubiquitination. Accepts ubiquitin from the E1 complex and catalyzes its covalent attachment to other proteins. In vitro catalyzes 'Lys-11'- and 'Lys-48'-, as well as 'Lys-63'-linked polyubiquitination. Participates in the regulation of transepithelial sodium transport in renal cells. This chain is Ubiquitin-conjugating enzyme E2 E3 (UBE2E3), found in Bos taurus (Bovine).